The sequence spans 166 residues: Large ribosomal subunit protein uL10 (166 aa).

The protein belongs to the universal ribosomal protein uL10 family. In terms of assembly, part of the ribosomal stalk of the 50S ribosomal subunit. The N-terminus interacts with L11 and the large rRNA to form the base of the stalk. The C-terminus forms an elongated spine to which L12 dimers bind in a sequential fashion forming a multimeric L10(L12)X complex.

Functionally, forms part of the ribosomal stalk, playing a central role in the interaction of the ribosome with GTP-bound translation factors. In Shewanella oneidensis (strain ATCC 700550 / JCM 31522 / CIP 106686 / LMG 19005 / NCIMB 14063 / MR-1), this protein is Large ribosomal subunit protein uL10.